Consider the following 348-residue polypeptide: Short-wave-sensitive opsin 1 (348 aa).

The Extracellular segment spans residues M1 to A33. N14 carries N-linked (GlcNAc...) asparagine glycosylation. Residues F34–A58 form a helical membrane-spanning segment. At T59–N70 the chain is on the cytoplasmic side. The chain crosses the membrane as a helical span at residues Y71–C96. Topologically, residues N97–E110 are extracellular. C107 and C184 form a disulfide bridge. Residues G111 to F130 form a helical membrane-spanning segment. Topologically, residues E131–H149 are cytoplasmic. A helical transmembrane segment spans residues A150 to S173. At R174–S199 the chain is on the extracellular side. Residues Y200–L227 traverse the membrane as a helical segment. Topologically, residues K228–R249 are cytoplasmic. Residues M250–V273 form a helical membrane-spanning segment. Residues N274–D281 lie on the Extracellular side of the membrane. A helical membrane pass occupies residues L282–M306. K293 carries the N6-(retinylidene)lysine modification. At N307–N348 the chain is on the cytoplasmic side.

Belongs to the G-protein coupled receptor 1 family. Opsin subfamily. Post-translationally, phosphorylated on some or all of the serine and threonine residues present in the C-terminal region.

It localises to the cell membrane. The protein resides in the photoreceptor inner segment. The protein localises to the cell projection. Its subcellular location is the cilium. It is found in the photoreceptor outer segment. It localises to the cytoplasm. The protein resides in the perinuclear region. Functionally, visual pigments are the light-absorbing molecules that mediate vision. They consist of an apoprotein, opsin, covalently linked to cis-retinal. Required for the maintenance of cone outer segment organization in the ventral retina, but not essential for the maintenance of functioning cone photoreceptors. Involved in ensuring correct abundance and localization of retinal membrane proteins. May increase spectral sensitivity in dim light. The polypeptide is Short-wave-sensitive opsin 1 (OPN1SW) (Pan paniscus (Pygmy chimpanzee)).